The sequence spans 807 residues: Enhancer of polycomb homolog 2 (807 aa).

Residues Lys135, Lys195, Lys324, and Lys362 each participate in a glycyl lysine isopeptide (Lys-Gly) (interchain with G-Cter in SUMO2) cross-link. A disordered region spans residues 376–396 (DEFPQVLSPVSEPEEENDPDG). A Phosphoserine modification is found at Ser538. Residues 600-613 (QLQQKQQSQHSSQQ) show a composition bias toward low complexity. 2 disordered regions span residues 600–628 (QLQQKQQSQHSSQQTHPKAQGSSTSDCMS) and 645–673 (SAPVPSRSEVAKEQNTGHNNINGVVQPSG). Composition is skewed to polar residues over residues 614–628 (THPKAQGSSTSDCMS) and 657–673 (EQNTGHNNINGVVQPSG). Phosphoserine is present on Ser754.

This sequence belongs to the enhancer of polycomb family.

Its subcellular location is the nucleus. In terms of biological role, may play a role in transcription or DNA repair. This chain is Enhancer of polycomb homolog 2 (EPC2), found in Homo sapiens (Human).